We begin with the raw amino-acid sequence, 259 residues long: 12alpha-hydroxysteroid dehydrogenase (259 aa).

The Proton acceptor role is filled by Tyr162.

It belongs to the short-chain dehydrogenases/reductases (SDR) family. In terms of assembly, homotetramer.

The catalysed reaction is cholate + NADP(+) = 3alpha,7alpha-dihydroxy-12-oxo-5beta-cholanate + NADPH + H(+). It catalyses the reaction deoxycholate + NADP(+) = 12-dehydrodeoxycholate + NADPH + H(+). In terms of biological role, catalyzes the oxidation of the 12alpha-hydroxy group of bile acids, like cholate and deoxycholate. Is also able to catalyze the reverse reaction in vitro. Is likely involved in an epimerization pathway of bile acids that converts hydroxy groups from alpha to beta positions via stable oxo-intermediates, which occurs in the human gut. This chain is 12alpha-hydroxysteroid dehydrogenase, found in Clostridium sp. (strain ATCC 29733 / VPI C48-50).